Here is a 148-residue protein sequence, read N- to C-terminus: Large ribosomal subunit protein bL9 (148 aa).

The protein belongs to the bacterial ribosomal protein bL9 family.

In terms of biological role, binds to the 23S rRNA. The sequence is that of Large ribosomal subunit protein bL9 from Clostridium perfringens (strain ATCC 13124 / DSM 756 / JCM 1290 / NCIMB 6125 / NCTC 8237 / Type A).